A 151-amino-acid polypeptide reads, in one-letter code: UPF0178 protein Ping_0754 (151 aa).

The protein belongs to the UPF0178 family.

This chain is UPF0178 protein Ping_0754, found in Psychromonas ingrahamii (strain DSM 17664 / CCUG 51855 / 37).